An 884-amino-acid polypeptide reads, in one-letter code: Probable inorganic carbon transporter subunit DabA (884 aa).

Zn(2+)-binding residues include Cys-390, Asp-392, His-582, and Cys-597.

It belongs to the inorganic carbon transporter (TC 9.A.2) DabA family. As to quaternary structure, forms a complex with DabB. Zn(2+) is required as a cofactor.

It localises to the cell membrane. Functionally, part of an energy-coupled inorganic carbon pump. This Staphylococcus saprophyticus subsp. saprophyticus (strain ATCC 15305 / DSM 20229 / NCIMB 8711 / NCTC 7292 / S-41) protein is Probable inorganic carbon transporter subunit DabA.